Reading from the N-terminus, the 985-residue chain is Coiled-coil domain-containing protein 33 (985 aa).

The tract at residues 228–263 is disordered; sequence MSPFSTDSDQEGLSWEAGPWQHPAQVPEEPQGRLDT. In terms of domain architecture, C2 spans 263–398; the sequence is TSQDPYPAAN…VFLRGVNEPL (136 aa). A coiled-coil region spans residues 599 to 745; sequence VEMNNYRRAM…LEERLCERKE (147 aa). The tract at residues 821-842 is disordered; that stretch reads AERLQDTNGPGHPKSTETLPAQ. The stretch at 885-928 forms a coiled coil; that stretch reads DKFNLLAKLEQAQSRILSLENQLEESARHWAREKQNLAIRLQEQ. A disordered region spans residues 931-985; that stretch reads GFGQPPNSIIIDQPNAGASKNPQQLSKLEPSLPSSDKKLNRPSDSQIEISNNQKT. Polar residues-rich tracts occupy residues 946–956 and 972–985; these read AGASKNPQQLS and PSDS…NQKT.

This Mus musculus (Mouse) protein is Coiled-coil domain-containing protein 33 (Ccdc33).